The sequence spans 128 residues: Small ribosomal subunit protein uS13 (128 aa).

Positions 95–118 are enriched in basic residues; it reads GLPVRGQRTHTNARTRKGPKKGLV. The disordered stretch occupies residues 95–128; that stretch reads GLPVRGQRTHTNARTRKGPKKGLVRKAAAPAPKA.

This sequence belongs to the universal ribosomal protein uS13 family. As to quaternary structure, part of the 30S ribosomal subunit. Forms a loose heterodimer with protein S19. Forms two bridges to the 50S subunit in the 70S ribosome.

Located at the top of the head of the 30S subunit, it contacts several helices of the 16S rRNA. In the 70S ribosome it contacts the 23S rRNA (bridge B1a) and protein L5 of the 50S subunit (bridge B1b), connecting the 2 subunits; these bridges are implicated in subunit movement. Contacts the tRNAs in the A and P-sites. The polypeptide is Small ribosomal subunit protein uS13 (Anaeromyxobacter sp. (strain K)).